Consider the following 351-residue polypeptide: Protein arginine N-methyltransferase 1-B (351 aa).

The SAM-dependent MTase PRMT-type domain occupies 30 to 331 (KDYYFDSYAH…KNNRDLDFTV (302 aa)). S-adenosyl-L-methionine contacts are provided by His-43, Arg-52, Gly-76, Glu-98, and Glu-127. Catalysis depends on residues Glu-142 and Glu-151.

Belongs to the class I-like SAM-binding methyltransferase superfamily. Protein arginine N-methyltransferase family. In terms of assembly, homodimer. Homooctamer; individual homodimers associates to form a homooctamer and homooligomerization is required for proper localization to the cell membrane. Individual homodimers can associate to form a homohexamer. Component of a complex with lsm14a/rap55a. Interacts with cirbp. From the onset of gastrulation, expressed in dorsal mesoderm, and in dorsal and ventral ectoderm. At the neurula and tail bud stages, expression is restricted to the neuroectoderm, with highest expression in the anterior neural plate.

Its subcellular location is the nucleus. It is found in the nucleoplasm. It localises to the cytoplasm. The protein resides in the cytosol. It catalyses the reaction L-arginyl-[protein] + 2 S-adenosyl-L-methionine = N(omega),N(omega)-dimethyl-L-arginyl-[protein] + 2 S-adenosyl-L-homocysteine + 2 H(+). The enzyme catalyses L-arginyl-[protein] + S-adenosyl-L-methionine = N(omega)-methyl-L-arginyl-[protein] + S-adenosyl-L-homocysteine + H(+). It carries out the reaction N(omega)-methyl-L-arginyl-[protein] + S-adenosyl-L-methionine = N(omega),N(omega)-dimethyl-L-arginyl-[protein] + S-adenosyl-L-homocysteine + H(+). Arginine methyltransferase that methylates (mono and asymmetric dimethylation) the guanidino nitrogens of arginyl residues present in target proteins. Constitutes the main enzyme that mediates monomethylation and asymmetric dimethylation of histone H4 'Arg-4' (H4R3me1 and H4R3me2a, respectively), a specific tag for epigenetic transcriptional activation. Methylates ilf3 to regulate its DNA-binding activity. Required for neural induction, playing a key role in the control of epidermal versus neural cell fate choice. In Xenopus laevis (African clawed frog), this protein is Protein arginine N-methyltransferase 1-B (prmt1-b).